The primary structure comprises 596 residues: Phosphoenolpyruvate carboxykinase [GTP] (596 aa).

Substrate-binding positions include arginine 77 and 205–207; that span reads YGG. Mn(2+) contacts are provided by lysine 214 and histidine 234. Substrate is bound at residue serine 256. A GTP-binding site is contributed by 257 to 262; that stretch reads ACGKTN. The active site involves cysteine 258. A Mn(2+)-binding site is contributed by aspartate 283. Residues 362-388 are disordered; that stretch reads KKGSTEKAAHPNSRFTAPAKNNPAISP. A substrate-binding site is contributed by 373–375; sequence NSR. GTP is bound by residues arginine 375, arginine 406, and 499 to 502; that span reads YGDN.

This sequence belongs to the phosphoenolpyruvate carboxykinase [GTP] family. In terms of assembly, monomer. It depends on Mn(2+) as a cofactor.

Its subcellular location is the cytoplasm. It catalyses the reaction oxaloacetate + GTP = phosphoenolpyruvate + GDP + CO2. Its pathway is carbohydrate biosynthesis; gluconeogenesis. In terms of biological role, catalyzes the conversion of oxaloacetate (OAA) to phosphoenolpyruvate (PEP), the rate-limiting step in the metabolic pathway that produces glucose from lactate and other precursors derived from the citric acid cycle. The sequence is that of Phosphoenolpyruvate carboxykinase [GTP] from Anaeromyxobacter dehalogenans (strain 2CP-C).